The primary structure comprises 741 residues: NAD(P)H-quinone oxidoreductase subunit 5, chloroplastic (741 aa).

The next 15 membrane-spanning stretches (helical) occupy residues 9–29 (WIIPLLPLTVTMLIGLGLLLF), 40–60 (WAVPSVLFLSIGMLLSVELAI), 89–109 (IDPLTSIMSILITTVGILVLI), 125–145 (FSYLSFFNASMLGLVTSSNLI), 147–167 (IYIFWELVGMCSYLLIGFWFA), 185–205 (GDFGLLLGILGLYWITGSFEF), 219–239 (NGVNSLFATLCAFLLFLGAVA), 258–278 (TPISALIHAATMVAAGIFLVA), 280–300 (LLPLFIVIPYIMNLISLIGVI), 327–347 (LGYIMLAPGIGSYRTALFHLI), 396–416 (TTFFWGTLSLCGIPPLACFWS), 425–445 (WLYSPIFAIIAYATAGLTAFY), 547–567 (LLPLLLLGLFTWFVGLIGIPF), 606–626 (ILSVSISVFGIFTASLLYGSV), and 721–741 (SYIFYYSSYVLIFVLIFYFFI).

It belongs to the complex I subunit 5 family. As to quaternary structure, NDH is composed of at least 16 different subunits, 5 of which are encoded in the nucleus.

The protein resides in the plastid. It is found in the chloroplast thylakoid membrane. It catalyses the reaction a plastoquinone + NADH + (n+1) H(+)(in) = a plastoquinol + NAD(+) + n H(+)(out). The catalysed reaction is a plastoquinone + NADPH + (n+1) H(+)(in) = a plastoquinol + NADP(+) + n H(+)(out). NDH shuttles electrons from NAD(P)H:plastoquinone, via FMN and iron-sulfur (Fe-S) centers, to quinones in the photosynthetic chain and possibly in a chloroplast respiratory chain. The immediate electron acceptor for the enzyme in this species is believed to be plastoquinone. Couples the redox reaction to proton translocation, and thus conserves the redox energy in a proton gradient. The polypeptide is NAD(P)H-quinone oxidoreductase subunit 5, chloroplastic (ndhF) (Ceratophyllum demersum (Rigid hornwort)).